We begin with the raw amino-acid sequence, 471 residues long: ATP synthase subunit beta (471 aa).

Position 156-163 (156-163) interacts with ATP; it reads GGAGVGKT.

It belongs to the ATPase alpha/beta chains family. In terms of assembly, F-type ATPases have 2 components, CF(1) - the catalytic core - and CF(0) - the membrane proton channel. CF(1) has five subunits: alpha(3), beta(3), gamma(1), delta(1), epsilon(1). CF(0) has three main subunits: a(1), b(2) and c(9-12). The alpha and beta chains form an alternating ring which encloses part of the gamma chain. CF(1) is attached to CF(0) by a central stalk formed by the gamma and epsilon chains, while a peripheral stalk is formed by the delta and b chains.

The protein resides in the cell membrane. It catalyses the reaction ATP + H2O + 4 H(+)(in) = ADP + phosphate + 5 H(+)(out). Functionally, produces ATP from ADP in the presence of a proton gradient across the membrane. The catalytic sites are hosted primarily by the beta subunits. This is ATP synthase subunit beta from Macrococcus caseolyticus (strain JCSC5402) (Macrococcoides caseolyticum).